The primary structure comprises 202 residues: ATP-dependent Clp protease proteolytic subunit (202 aa).

Ser101 functions as the Nucleophile in the catalytic mechanism. Residue His126 is part of the active site.

The protein belongs to the peptidase S14 family. As to quaternary structure, component of the chloroplastic Clp protease core complex.

Its subcellular location is the plastid. The protein resides in the chloroplast stroma. It carries out the reaction Hydrolysis of proteins to small peptides in the presence of ATP and magnesium. alpha-casein is the usual test substrate. In the absence of ATP, only oligopeptides shorter than five residues are hydrolyzed (such as succinyl-Leu-Tyr-|-NHMec, and Leu-Tyr-Leu-|-Tyr-Trp, in which cleavage of the -Tyr-|-Leu- and -Tyr-|-Trp bonds also occurs).. In terms of biological role, cleaves peptides in various proteins in a process that requires ATP hydrolysis. Has a chymotrypsin-like activity. Plays a major role in the degradation of misfolded proteins. The polypeptide is ATP-dependent Clp protease proteolytic subunit (Acorus gramineus (Dwarf sweet flag)).